The primary structure comprises 357 residues: DNA primase small subunit PriS (357 aa).

Active-site residues include Asp105, Asp107, and Asp259.

Belongs to the eukaryotic-type primase small subunit family. In terms of assembly, heterodimer of a small subunit (PriS) and a large subunit (PriL). Mg(2+) serves as cofactor. It depends on Mn(2+) as a cofactor.

In terms of biological role, catalytic subunit of DNA primase, an RNA polymerase that catalyzes the synthesis of short RNA molecules used as primers for DNA polymerase during DNA replication. The small subunit contains the primase catalytic core and has DNA synthesis activity on its own. Binding to the large subunit stabilizes and modulates the activity, increasing the rate of DNA synthesis while decreasing the length of the DNA fragments, and conferring RNA synthesis capability. The DNA polymerase activity may enable DNA primase to also catalyze primer extension after primer synthesis. May also play a role in DNA repair. The chain is DNA primase small subunit PriS from Methanococcus maripaludis (strain C5 / ATCC BAA-1333).